The sequence spans 259 residues: EFDPRRDTLWLTGDLVARGPGSLEVLRYVKSLGDTVRLVLGNHDLHLLAVFAGISRNKPKDRLKPLLEAPDADELLNWLRRQPLLQVDEEKKLVMAHAGITPQWDLETAQQCARDVEAVLSSDSYPFFLDAMYGDMPNHWSNELSGLARLRFISNAFTRMRYCFPNGQLDMYSKEAPEDAPAPLKPWFAIPGPVSNAYSIAFGHWASLEGRGTPEGIYALDTGCCWGGELTCLRWEDKQYFTQPSNRQKSLDEGEAVAS.

The protein belongs to the Ap4A hydrolase family.

The enzyme catalyses P(1),P(4)-bis(5'-adenosyl) tetraphosphate + H2O = 2 ADP + 2 H(+). Functionally, hydrolyzes diadenosine 5',5'''-P1,P4-tetraphosphate to yield ADP. The sequence is that of Bis(5'-nucleosyl)-tetraphosphatase, symmetrical (apaH) from Klebsiella aerogenes (Enterobacter aerogenes).